The primary structure comprises 369 residues: Biotin synthase (369 aa).

Residues 51–269 (NYVQVSTLLS…IAVARIMMPK (219 aa)) enclose the Radical SAM core domain. [4Fe-4S] cluster contacts are provided by C66, C70, and C73. [2Fe-2S] cluster contacts are provided by C110, C141, C201, and R273.

The protein belongs to the radical SAM superfamily. Biotin synthase family. Homodimer. It depends on [4Fe-4S] cluster as a cofactor. [2Fe-2S] cluster is required as a cofactor.

It catalyses the reaction (4R,5S)-dethiobiotin + (sulfur carrier)-SH + 2 reduced [2Fe-2S]-[ferredoxin] + 2 S-adenosyl-L-methionine = (sulfur carrier)-H + biotin + 2 5'-deoxyadenosine + 2 L-methionine + 2 oxidized [2Fe-2S]-[ferredoxin]. It participates in cofactor biosynthesis; biotin biosynthesis; biotin from 7,8-diaminononanoate: step 2/2. Functionally, catalyzes the conversion of dethiobiotin (DTB) to biotin by the insertion of a sulfur atom into dethiobiotin via a radical-based mechanism. The sequence is that of Biotin synthase from Pseudoalteromonas atlantica (strain T6c / ATCC BAA-1087).